We begin with the raw amino-acid sequence, 139 residues long: Probable trafficking protein particle complex subunit 2 (139 aa).

The protein belongs to the TRAPP small subunits family. Sedlin subfamily. Part of the multisubunit TRAPP (transport protein particle) complex.

It is found in the cytoplasm. The protein resides in the perinuclear region. It localises to the endoplasmic reticulum. The protein localises to the golgi apparatus. Its function is as follows. May play a role in vesicular transport from endoplasmic reticulum to Golgi. Involved in dsRNA uptake. The protein is Probable trafficking protein particle complex subunit 2 of Drosophila melanogaster (Fruit fly).